The sequence spans 355 residues: uncharacterized protein (355 aa).

Residues 1–22 form the signal peptide; it reads MRLTHVTACICLLVAVAVLFSG.

It belongs to the bacterial solute-binding protein 1 family. WtpA subfamily.

This is an uncharacterized protein from Methanoculleus marisnigri (strain ATCC 35101 / DSM 1498 / JR1).